We begin with the raw amino-acid sequence, 1370 residues long: DNA-directed RNA polymerase subunit beta (1370 aa).

The protein belongs to the RNA polymerase beta chain family. As to quaternary structure, the RNAP catalytic core consists of 2 alpha, 1 beta, 1 beta' and 1 omega subunit. When a sigma factor is associated with the core the holoenzyme is formed, which can initiate transcription.

The enzyme catalyses RNA(n) + a ribonucleoside 5'-triphosphate = RNA(n+1) + diphosphate. DNA-dependent RNA polymerase catalyzes the transcription of DNA into RNA using the four ribonucleoside triphosphates as substrates. This is DNA-directed RNA polymerase subunit beta from Bordetella petrii (strain ATCC BAA-461 / DSM 12804 / CCUG 43448).